A 286-amino-acid polypeptide reads, in one-letter code: Phycobilisome 31.8 kDa linker polypeptide, phycoerythrin-associated, rod (286 aa).

The PBS-linker domain occupies P2–L179. Residues G231–V286 enclose the CpcD-like domain.

The protein belongs to the phycobilisome linker protein family. In terms of assembly, the phycobilisome is a hemidiscoidal structure that is composed of two distinct substructures: a core complex and six rods radiating from the core.

It localises to the cellular thylakoid membrane. Rod linker protein, associated with phycoerythrocyanin. Linker polypeptides determine the state of aggregation and the location of the disk-shaped phycobiliprotein units within the phycobilisome and modulate their spectroscopic properties in order to mediate a directed and optimal energy transfer. In Microchaete diplosiphon (Fremyella diplosiphon), this protein is Phycobilisome 31.8 kDa linker polypeptide, phycoerythrin-associated, rod (cpeC).